We begin with the raw amino-acid sequence, 81 residues long: Putative membrane protein insertion efficiency factor (81 aa).

The protein belongs to the UPF0161 family.

The protein localises to the cell inner membrane. In terms of biological role, could be involved in insertion of integral membrane proteins into the membrane. The protein is Putative membrane protein insertion efficiency factor of Pseudomonas syringae pv. tomato (strain ATCC BAA-871 / DC3000).